We begin with the raw amino-acid sequence, 269 residues long: Pyrroline-5-carboxylate reductase (269 aa).

The protein belongs to the pyrroline-5-carboxylate reductase family.

Its subcellular location is the cytoplasm. The catalysed reaction is L-proline + NADP(+) = (S)-1-pyrroline-5-carboxylate + NADPH + 2 H(+). The enzyme catalyses L-proline + NAD(+) = (S)-1-pyrroline-5-carboxylate + NADH + 2 H(+). It functions in the pathway amino-acid biosynthesis; L-proline biosynthesis; L-proline from L-glutamate 5-semialdehyde: step 1/1. Its activity is regulated as follows. Inhibited by p-chloromercuribenzoate. Catalyzes the reduction of 1-pyrroline-5-carboxylate (PCA) to L-proline. Does not catalyze the reverse reaction. The protein is Pyrroline-5-carboxylate reductase of Escherichia coli (strain K12).